The following is a 318-amino-acid chain: WRKY transcription factor 28 (318 aa).

Polar residues-rich tracts occupy residues 74–84 and 106–115; these read SSEVFNSSIDQ and RVSPSNSSSS. Positions 74–158 are disordered; that stretch reads SSEVFNSSID…KTEVKKQREP (85 aa). Basic and acidic residues-rich tracts occupy residues 116-126 and 148-158; these read EADHPGEDSGK and KKTEVKKQREP. Positions 166–231 form a DNA-binding region, WRKY; it reads SEVDHLEDGY…YEGQHNHPIP (66 aa).

The protein belongs to the WRKY group II-c family.

Its subcellular location is the nucleus. Transcription factor. Interacts specifically with the W box (5'-(T)TGAC[CT]-3'), a frequently occurring elicitor-responsive cis-acting element. The polypeptide is WRKY transcription factor 28 (WRKY28) (Arabidopsis thaliana (Mouse-ear cress)).